The following is a 434-amino-acid chain: Acyl transferase 15 (434 aa).

Catalysis depends on proton acceptor residues His-164 and Asp-371.

The protein belongs to the plant acyltransferase family.

Functionally, involved in the incorporation of ferulate into the cell wall. This chain is Acyl transferase 15, found in Oryza sativa subsp. japonica (Rice).